The sequence spans 384 residues: Probable endopolygalacturonase C (384 aa).

A signal peptide spans 1–19 (MVRQLALACGLLAAVAVQA). Residues 20–40 (APAEPAHPMVTEAPDASLLHK) constitute a propeptide that is removed on maturation. The cysteines at positions 45 and 63 are disulfide-linked. 2 PbH1 repeats span residues 176-207 (ATDL…DIGE) and 208-229 (STDI…AINS). The Proton donor role is filled by Asp-222. Residues Cys-224 and Cys-240 are joined by a disulfide bond. His-244 is an active-site residue. 2 PbH1 repeats span residues 254 to 280 (RDDN…RIKA) and 288 to 310 (ISDI…VIEQ). An N-linked (GlcNAc...) asparagine glycan is attached at Asn-261. 2 disulfide bridges follow: Cys-349–Cys-354 and Cys-373–Cys-382.

Belongs to the glycosyl hydrolase 28 family.

The protein localises to the secreted. It carries out the reaction (1,4-alpha-D-galacturonosyl)n+m + H2O = (1,4-alpha-D-galacturonosyl)n + (1,4-alpha-D-galacturonosyl)m.. Involved in maceration and soft-rotting of plant tissue. Hydrolyzes the 1,4-alpha glycosidic bonds of de-esterified pectate in the smooth region of the plant cell wall. The polypeptide is Probable endopolygalacturonase C (pgaC) (Aspergillus aculeatus).